Here is a 160-residue protein sequence, read N- to C-terminus: Large ribosomal subunit protein uL13 (160 aa).

This sequence belongs to the universal ribosomal protein uL13 family. Part of the 50S ribosomal subunit.

In terms of biological role, this protein is one of the early assembly proteins of the 50S ribosomal subunit, although it is not seen to bind rRNA by itself. It is important during the early stages of 50S assembly. This chain is Large ribosomal subunit protein uL13, found in Orientia tsutsugamushi (strain Ikeda) (Rickettsia tsutsugamushi).